The following is a 306-amino-acid chain: Uricase (306 aa).

Residues lysine 5 and threonine 65 each act as charge relay system in the active site. Residues threonine 65, aspartate 66, phenylalanine 175, arginine 192, isoleucine 240, glutamine 241, and asparagine 267 each coordinate urate. The interval 281–306 is disordered; it reads AKVLREPPRPTGYQQFSMDRSDLEEQ.

This sequence belongs to the uricase family.

The catalysed reaction is urate + O2 + H2O = 5-hydroxyisourate + H2O2. The protein operates within purine metabolism; urate degradation; (S)-allantoin from urate: step 1/3. In terms of biological role, catalyzes the oxidation of uric acid to 5-hydroxyisourate, which is further processed to form (S)-allantoin. The sequence is that of Uricase from Halalkalicoccus jeotgali (strain DSM 18796 / CECT 7217 / JCM 14584 / KCTC 4019 / B3).